Reading from the N-terminus, the 938-residue chain is Glutamate receptor ionotropic, NMDA 1 (938 aa).

Positions 1-18 (MSTMHLLTFALLFSCSFA) are cleaved as a signal peptide. Residues 19–559 (RAACDPKIVN…TLDSFMQPFQ (541 aa)) lie on the Extracellular side of the membrane. 10 N-linked (GlcNAc...) asparagine glycosylation sites follow: Asn-61, Asn-203, Asn-239, Asn-276, Asn-300, Asn-350, Asn-368, Asn-440, Asn-471, and Asn-491. Cys-79 and Cys-308 are joined by a disulfide. 2 disulfides stabilise this stretch: Cys-420–Cys-454 and Cys-436–Cys-455. Glycine is bound by residues Pro-516, Thr-518, and Arg-523. A helical transmembrane segment spans residues 560–580 (STLWLLVGLSVHVVAVMLYLL). At 581–602 (DRFSPFGRFKVNSEEEEEDALT) the chain is on the cytoplasmic side. Positions 603-624 (LSSAMWFSWGVLLNSGIGEGAP) form an intramembrane region, discontinuously helical. Residues 603–624 (LSSAMWFSWGVLLNSGIGEGAP) form a pore-forming region. The Cytoplasmic segment spans residues 625-630 (RSFSAR). The chain crosses the membrane as a helical span at residues 631 to 647 (ILGMVWAGFAMIIVASY). At 648–812 (TANLAAFLVL…NAPATLTFEN (165 aa)) the chain is on the extracellular side. Residue Asn-674 is glycosylated (N-linked (GlcNAc...) asparagine). The glycine site is built by Ser-688 and Asp-732. Cys-744 and Cys-798 form a disulfide bridge. The N-linked (GlcNAc...) asparagine glycan is linked to Asn-771. Residues 813–833 (MAGVFMLVAGGIVAGIFLIFI) traverse the membrane as a helical segment. Residues 834-938 (EIAYKRHKDA…LQLCSRHRES (105 aa)) are Cytoplasmic-facing. Ser-889 is modified (phosphoserine; by PKC). The interval 889–938 (SSFKRRRSSKDTSTGGGRGALQNQKDTVLPRRAIEREEGQLQLCSRHRES) is disordered. At Ser-890 the chain carries Phosphoserine. A phosphoserine; by PKC mark is found at Ser-896 and Ser-897. Basic and acidic residues predominate over residues 916-927 (VLPRRAIEREEG).

Belongs to the glutamate-gated ion channel (TC 1.A.10.1) family. NR1/GRIN1 subfamily. As to quaternary structure, heterotetramer; the NMDAR subunits are modular and harbor tiered domains that function in concert to regulate opening and closing of the cation-selective ion channel pore. Forms heterotetrameric channels composed of two GluN1/zeta subunits (GRIN1), and two identical GluN2/epsilon subunits (GRIN2A, GRIN2B, GRIN2C or GRIN2D) or GluN3 subunits (GRIN3A or GRIN3B) (in vitro). Can also form heterotetrameric channels that contain at least two GluN1 subunits and at least two different GluN2 subunits (or a combination of one GluN2 and one GluN3 subunits) (in vitro). In vivo, the subunit composition may vary in function of the expression levels of the different subunits. Found in a complex with GRIN2A or GRIN2B, GRIN3A and PPP2CB. Found in a complex with GRIN2A or GRIN2B and GRIN3B. Interacts with SNX27 (via PDZ domain); the interaction is required for recycling to the plasma membrane when endocytosed and prevent degradation in lysosomes. Interacts with DLG4 and MPDZ. Interacts with LRFN1 and LRFN2. Interacts with MYZAP. Found in a complex with DLG4 and PRR7. Found in a complex with GRIN2B and PRR7. Interacts with PRR7; the interaction is reduced following NMDA receptor activity. Post-translationally, NMDA is probably regulated by C-terminal phosphorylation of an isoform of GRIN1 by PKC. Dephosphorylated on Ser-897 probably by protein phosphatase 2A (PPP2CB). Its phosphorylated state is influenced by the formation of the NMDAR-PPP2CB complex and the NMDAR channel activity. In terms of tissue distribution, detected in brain (at protein level). Detected in brain.

It localises to the cell membrane. The protein resides in the postsynaptic cell membrane. It is found in the postsynaptic density membrane. The protein localises to the synaptic cell membrane. The enzyme catalyses Ca(2+)(in) = Ca(2+)(out). The catalysed reaction is Na(+)(in) = Na(+)(out). It carries out the reaction K(+)(in) = K(+)(out). Component of N-methyl-D-aspartate (NMDA) receptors (NMDARs) that function as heterotetrameric, ligand-gated cation channels with high calcium permeability and voltage-dependent block by Mg(2+). NMDARs participate in synaptic plasticity for learning and memory formation by contributing to the long-term potentiation (LTP). Channel activation requires binding of the neurotransmitter L-glutamate to the GluN2 subunit, glycine or D-serine binding to the GluN1 subunit, plus membrane depolarization to eliminate channel inhibition by Mg(2+). NMDARs mediate simultaneously the potasium efflux and the influx of calcium and sodium. Each GluN2 or GluN3 subunit confers differential attributes to channel properties, including activation, deactivation and desensitization kinetics, pH sensitivity, Ca2(+) permeability, and binding to allosteric modulators. This is Glutamate receptor ionotropic, NMDA 1 from Mus musculus (Mouse).